The following is a 1043-amino-acid chain: Unconventional myosin-Ia (1043 aa).

A Myosin motor domain is found at 8-694 (VGVEDLILLE…TLFYLEEQRR (687 aa)). 101 to 108 (GESGAGKT) provides a ligand contact to ATP. The tract at residues 571 to 593 (VAVLMKNLYSKNPNYIRCIKPND) is actin-binding. 3 IQ domains span residues 697-719 (LQQL…HYQQ), 720-742 (MRKS…HYGK), and 743-772 (IRSS…SGAA). Positions 858 to 1042 (KASYPQSVPI…KGSNAMEVTV (185 aa)) constitute a TH1 domain.

The protein belongs to the TRAFAC class myosin-kinesin ATPase superfamily. Myosin family. In terms of processing, phosphorylated by ALPK1.

Involved in directing the movement of organelles along actin filaments. The polypeptide is Unconventional myosin-Ia (Myo1a) (Mus musculus (Mouse)).